We begin with the raw amino-acid sequence, 391 residues long: FLUCTUATING-LIGHT-ACCLIMATION protein 1, chloroplastic (391 aa).

The N-terminal 48 residues, Met1–Ser48, are a transit peptide targeting the chloroplast. Residues Ala87–Ala107 traverse the membrane as a helical segment. The segment covering Ser116 to Ser138 has biased composition (low complexity). The disordered stretch occupies residues Ser116 to Pro140. 2 helical membrane-spanning segments follow: residues Phe168 to Leu188 and Tyr321 to Gly341.

The protein belongs to the FLAP family.

It is found in the plastid. The protein resides in the chloroplast thylakoid membrane. Its subcellular location is the chloroplast membrane. The protein localises to the chloroplast envelope. Functionally, monitors proton H(+) homeostasis in chloroplasts to manipulate luminal acidification levels appropriately to balance photoprotection and photochemical processes. Required during acclimation response to fluctuating light (e.g. photosynthetic activity optimization) by controlling non-photochemical quenching (NPQ); acts independently from DLDG1. This chain is FLUCTUATING-LIGHT-ACCLIMATION protein 1, chloroplastic, found in Arabidopsis thaliana (Mouse-ear cress).